A 363-amino-acid chain; its full sequence is 3-ketodihydrosphingosine reductase TSC10 (363 aa).

Leu-10 contacts NADP(+). The NADPH site is built by Gly-13, Ser-15, and Gly-17. Residues Gly-13–Gly-17 carry the GXSXG motif. Leu-18 contributes to the NADP(+) binding site. Positions 40, 44, 131, and 132 each coordinate NADPH. Asp-131 contributes to the NADP(+) binding site. The active-site Proton donor is Ser-206. Residues Tyr-220, Lys-224, and Ser-253 each contribute to the NADP(+) site. Tyr-220 serves as the catalytic Proton acceptor. The active-site Lowers pKa of active site Tyr is the Lys-224. The helical transmembrane segment at Phe-324–Leu-344 threads the bilayer.

The protein belongs to the short-chain dehydrogenases/reductases (SDR) family.

Its subcellular location is the endoplasmic reticulum membrane. The enzyme catalyses sphinganine + NADP(+) = 3-oxosphinganine + NADPH + H(+). The protein operates within lipid metabolism; sphingolipid metabolism. Catalyzes the reduction of 3'-oxosphinganine (3-ketodihydrosphingosine/KDS) to sphinganine (dihydrosphingosine/DHS), the second step of de novo sphingolipid biosynthesis. This chain is 3-ketodihydrosphingosine reductase TSC10 (TSC10), found in Candida glabrata (strain ATCC 2001 / BCRC 20586 / JCM 3761 / NBRC 0622 / NRRL Y-65 / CBS 138) (Yeast).